A 254-amino-acid chain; its full sequence is Major prion protein (254 aa).

A signal peptide spans 1–22 (MANLSYWLLALFVATWTDVGLC). Positions 23-231 (KKRPKPGGWN…SQAYYDGRRS (209 aa)) are interaction with GRB2, ERI3 and SYN1. A disordered region spans residues 25–108 (RPKPGGWNTG…WNKPNKPKTS (84 aa)). 5 consecutive repeat copies span residues 51–59 (PQGGGTWGQ), 60–67 (PHGGGWGQ), 68–75 (PHGGGWGQ), 76–83 (PHGGGWGQ), and 84–91 (PHGGGWGQ). Residues 51–91 (PQGGGTWGQPHGGGWGQPHGGGWGQPHGGGWGQPHGGGWGQ) form a 5 X 8 AA tandem repeats of P-H-G-G-G-W-G-Q region. A compositionally biased stretch (gly residues) spans 52–95 (QGGGTWGQPHGGGWGQPHGGGWGQPHGGGWGQPHGGGWGQGGGT). 12 residues coordinate Cu(2+): His61, Gly62, Gly63, His69, Gly70, Gly71, His77, Gly78, Gly79, His85, Gly86, and Gly87. Positions 90-231 (GQGGGTHNQW…SQAYYDGRRS (142 aa)) are prP27-30 (protease resistant core). The cysteines at positions 179 and 214 are disulfide-linked. 2 N-linked (GlcNAc...) asparagine glycosylation sites follow: Asn181 and Asn197. Ser231 carries the GPI-anchor amidated serine lipid modification. Positions 232 to 254 (SAVLFSSPPVILLISFLIFLIVG) are cleaved as a propeptide — removed in mature form.

It belongs to the prion family. As to quaternary structure, monomer and homodimer. Has a tendency to aggregate into amyloid fibrils containing a cross-beta spine, formed by a steric zipper of superposed beta-strands. Soluble oligomers may represent an intermediate stage on the path to fibril formation. Copper binding may promote oligomerization. Interacts with GRB2, APP, ERI3/PRNPIP and SYN1. Mislocalized cytosolically exposed PrP interacts with MGRN1; this interaction alters MGRN1 subcellular location and causes lysosomal enlargement. Interacts with KIAA1191.

The protein localises to the cell membrane. Its subcellular location is the golgi apparatus. Its function is as follows. Its primary physiological function is unclear. Has cytoprotective activity against internal or environmental stresses. May play a role in neuronal development and synaptic plasticity. May be required for neuronal myelin sheath maintenance. May play a role in iron uptake and iron homeostasis. Soluble oligomers are toxic to cultured neuroblastoma cells and induce apoptosis (in vitro). Association with GPC1 (via its heparan sulfate chains) targets PRNP to lipid rafts. Also provides Cu(2+) or Zn(2+) for the ascorbate-mediated GPC1 deaminase degradation of its heparan sulfate side chains. The chain is Major prion protein (PRNP) from Nothocricetulus migratorius (Gray dwarf hamster).